A 491-amino-acid polypeptide reads, in one-letter code: Katanin p60 ATPase-containing subunit A1 (491 aa).

The interaction with KATNB1 stretch occupies residues 1–29; sequence MSLLMISENVKLAREYALLGNYDSAMVYY. An interaction with dynein and NDEL1 region spans residues 1–75; that stretch reads MSLLMISENV…VKDIMKTLES (75 aa). Residues 1 to 185 are interaction with microtubules; the sequence is MSLLMISENV…EPETNKFDST (185 aa). Phosphoserine; by DYRK2 occurs at positions 42 and 109. The segment at 87 to 185 is disordered; it reads QHDLPASEGE…EPETNKFDST (99 aa). Thr133 is modified (phosphothreonine; by DYRK2). Residues 145–169 show a composition bias toward basic and acidic residues; that stretch reads HNDRGKAVRCREKKEQNKGREEKNK. Phosphoserine is present on Ser170. 249–256 provides a ligand contact to ATP; the sequence is GPPGTGKT.

It belongs to the AAA ATPase family. Katanin p60 subunit A1 subfamily. As to quaternary structure, can homooligomerize into hexameric rings, which may be promoted by interaction with microtubules. Interacts with KATNB1, which may serve as a targeting subunit. Interacts with ASPM; the katanin complex formation KATNA1:KATNB1 is required for the association of ASPM Interacts with dynein and NDEL1. Associates with the E3 ligase complex containing DYRK2, EDD/UBR5, DDB1 and DCAF1 proteins (EDVP complex). Interacts with KLHL42 (via the kelch domains). Interacts with CUL3; the interaction is enhanced by KLHL42. Interacts with KATNB1 and KATNBL1. Interacts with CAMSAP2 and CAMSAP3; leading to regulate the length of CAMSAP-decorated microtubule stretches. In terms of processing, phosphorylation by DYRK2 triggers ubiquitination and subsequent degradation. Post-translationally, ubiquitinated by the BCR(KLHL42) E3 ubiquitin ligase complex, leading to its proteasomal degradation. Ubiquitinated by the EDVP E3 ligase complex and subsequently targeted for proteasomal degradation.

Its subcellular location is the cytoplasm. The protein resides in the midbody. It is found in the cytoskeleton. The protein localises to the microtubule organizing center. It localises to the centrosome. Its subcellular location is the spindle pole. The protein resides in the spindle. The enzyme catalyses n ATP + n H2O + a microtubule = n ADP + n phosphate + (n+1) alpha/beta tubulin heterodimers.. Its activity is regulated as follows. ATPase activity is stimulated by microtubules, which promote homooligomerization. ATP-dependent microtubule severing is stimulated by interaction with KATNB1. Catalytic subunit of a complex which severs microtubules in an ATP-dependent manner. Microtubule severing may promote rapid reorganization of cellular microtubule arrays and the release of microtubules from the centrosome following nucleation. Microtubule release from the mitotic spindle poles may allow depolymerization of the microtubule end proximal to the spindle pole, leading to poleward microtubule flux and poleward motion of chromosome. Microtubule release within the cell body of neurons may be required for their transport into neuronal processes by microtubule-dependent motor proteins. This transport is required for axonal growth. This chain is Katanin p60 ATPase-containing subunit A1, found in Macaca fascicularis (Crab-eating macaque).